Reading from the N-terminus, the 143-residue chain is Large ribosomal subunit protein uL11 (143 aa).

It belongs to the universal ribosomal protein uL11 family. As to quaternary structure, part of the ribosomal stalk of the 50S ribosomal subunit. Interacts with L10 and the large rRNA to form the base of the stalk. L10 forms an elongated spine to which L12 dimers bind in a sequential fashion forming a multimeric L10(L12)X complex. In terms of processing, one or more lysine residues are methylated.

Functionally, forms part of the ribosomal stalk which helps the ribosome interact with GTP-bound translation factors. The chain is Large ribosomal subunit protein uL11 from Azotobacter vinelandii (strain DJ / ATCC BAA-1303).